Consider the following 1444-residue polypeptide: MHQPKKRLAKKSWAFLTAALTLGVITGVGGYFLFNQNKQRSSVSNFAYQPKQLSVKHQQAVDETLTPWTWNNNNFSSLKITGENPGSFGLVRSQNDNLNISSVTKNSSDDNLKYLNAVEKYLDGQQNFAIRRYDNNGRALYDINLAKMENPSTVQRGLNGEPIFDPFKGFGLTGNAPTDWNEIKGKVPVEVVQSPHSPNLYFVLLVPKVALEYHNLNNQVVKESLEVKATQSSFNPTQRLQKDSPVKDSSKQGEKLSETTASSMSSGMATSTRAKALKVEVERGSQSDSLLKNDFAKKPLKHKNSSGEVKLEAEKEFTEAWKPLLTTDQIAREKGMGATVVSFYDAPYSENHTAFGLVDHIDPKKMVENYPPSWKTPKWNHHGIWDYNARNLLLQTTGFFNPRRHPEWFDEGQAKADNTSPGFKVGDTDHKKDGFKKNSSSPIALPFEAYFANIGNMVAIGNSVFIFGGNGHATKMFTTNPLSIGVFRIKYTDNFSKSSVTGWPYAVLFGGLINPQTNGLKDLPLGTNRWFEYVPRMAVSGVKWVGNQLVLAGTLTMGDTATVPRLKYDQLEKHLNLVAQGQGLLREDLQIFTPYGWANRPDIPVGAWLQDEMGSKFGPHYFLNNPDIQDNVNNDTVEALISSYKNTDKLKHVYPYRYSGLYAWQLFNWSNKLTNTPLSANFVNENSYAPNSLFAAILNEDLLTGLSDKIFYGKENEFAENEADRFNQLLSLNPNPNTNWARYLNVVQRFTTGPNLDSSTFDQFLDFLPWIGNGKPFSNSPSPSTSASSSTPLPTFSNINVGVKSMITQHLNKENTRWVFIPNFSPDIWTGAGYRVQSANQKNGIPFEQVKPSNNSTPFDPNSDDNKVTPSGGSSKPTTYPALPNSISPTSDWINALTFTNKNNPQRNQLLLRSLLGTIPVLINKSGDSNDQFNKDSEQKWDKTETNEGNLPGFGEVNGLYNAALLHTYGFFGTNTNSTDPKIGFKADSSSSSSSTLVGSGLNWTSQDVGNLVVINDTSFGFQLGGWFITFTDFIRPRTGYLGITLSSLQDQTIIWADQPWTSFKGSYLDSDGTPKSLWDPTALKSLPNSSTTYDTNPTLSPSFQLYQPNKVKAYQTTNTYNKLIEPVDATSAATNMTSLLKLLTTKNIKAKLGKGTASSQGNNNGGGVSQTINTITTTGNISEGLKEETSIQAETLKKFFDSKQNNKSEIGIGDSTFTKMDGKLTGVVSTPLVNLINGQGATSDSDTEKISFKPGNQIDFNRLFTLPVTELFDPNTMFVYDQYVPLLVNLPSGFDQASIRLKVISYSVENQTLGVRLEFKDPQTQQFIPVLNASSTGPQTVFQPFNQWADYVLPLIVTVPIVVIILSVTLGLTIGIPMHRNKKALQAGFDLSNKKVDVLTKAVGSVFKEIINRTGISNAPKKLKQATPTKPTPKTPPKPPVKQ.

Positions 1–30 (MHQPKKRLAKKSWAFLTAALTLGVITGVGG) are cleaved as a signal peptide. Disordered regions lie at residues 231–283 (QSSF…EVER), 845–885 (IPFE…ALPN), and 927–949 (GDSNDQFNKDSEQKWDKTETNEG). Residues 240–257 (LQKDSPVKDSSKQGEKLS) show a composition bias toward basic and acidic residues. The span at 258-272 (ETTASSMSSGMATST) shows a compositional bias: low complexity. Polar residues-rich tracts occupy residues 851-860 (KPSNNSTPFD) and 868-878 (VTPSGGSSKPT). Residues 933–946 (FNKDSEQKWDKTET) show a composition bias toward basic and acidic residues. Residues 1353–1373 (VLPLIVTVPIVVIILSVTLGL) traverse the membrane as a helical segment. A disordered region spans residues 1419-1444 (NAPKKLKQATPTKPTPKTPPKPPVKQ). Over residues 1431–1444 (KPTPKTPPKPPVKQ) the composition is skewed to pro residues.

The protein belongs to the adhesin P1 family.

Its subcellular location is the cell membrane. The protein is the major adhesin mediating the attachment of this mycoplasma to the ciliated epithelium. This chain is Adhesin P1 (mgpA), found in Mycoplasma genitalium (strain ATCC 33530 / DSM 19775 / NCTC 10195 / G37) (Mycoplasmoides genitalium).